A 208-amino-acid polypeptide reads, in one-letter code: MKEELAVYFIAGTQDIVRGTLPSVLEEALKGGITCFQYREKGAGSLQTASERKEMALECQKLCAKYQVPFIINDDVVLALEIGADGIHVGQNDEEIHQVITSCAGKMKIGLSVHSVSEAEEAERLGAVDYIGVGPIFPTISKADAEPESGTEILKEIRRAGIKLPIVGIGGINEANIAEVLAAGADGVSVISAITRADDYQLVIANLI.

4-amino-2-methyl-5-(diphosphooxymethyl)pyrimidine contacts are provided by residues 37–41 and N73; that span reads QYREK. D74 and D93 together coordinate Mg(2+). A 4-amino-2-methyl-5-(diphosphooxymethyl)pyrimidine-binding site is contributed by S112. Position 139–141 (139–141) interacts with 2-[(2R,5Z)-2-carboxy-4-methylthiazol-5(2H)-ylidene]ethyl phosphate; sequence TIS. K142 provides a ligand contact to 4-amino-2-methyl-5-(diphosphooxymethyl)pyrimidine. Residues G171 and 191 to 192 contribute to the 2-[(2R,5Z)-2-carboxy-4-methylthiazol-5(2H)-ylidene]ethyl phosphate site; that span reads IS.

Belongs to the thiamine-phosphate synthase family. The cofactor is Mg(2+).

The catalysed reaction is 2-[(2R,5Z)-2-carboxy-4-methylthiazol-5(2H)-ylidene]ethyl phosphate + 4-amino-2-methyl-5-(diphosphooxymethyl)pyrimidine + 2 H(+) = thiamine phosphate + CO2 + diphosphate. It catalyses the reaction 2-(2-carboxy-4-methylthiazol-5-yl)ethyl phosphate + 4-amino-2-methyl-5-(diphosphooxymethyl)pyrimidine + 2 H(+) = thiamine phosphate + CO2 + diphosphate. It carries out the reaction 4-methyl-5-(2-phosphooxyethyl)-thiazole + 4-amino-2-methyl-5-(diphosphooxymethyl)pyrimidine + H(+) = thiamine phosphate + diphosphate. It participates in cofactor biosynthesis; thiamine diphosphate biosynthesis; thiamine phosphate from 4-amino-2-methyl-5-diphosphomethylpyrimidine and 4-methyl-5-(2-phosphoethyl)-thiazole: step 1/1. Its function is as follows. Condenses 4-methyl-5-(beta-hydroxyethyl)thiazole monophosphate (THZ-P) and 2-methyl-4-amino-5-hydroxymethyl pyrimidine pyrophosphate (HMP-PP) to form thiamine monophosphate (TMP). This chain is Thiamine-phosphate synthase, found in Listeria welshimeri serovar 6b (strain ATCC 35897 / DSM 20650 / CCUG 15529 / CIP 8149 / NCTC 11857 / SLCC 5334 / V8).